A 430-amino-acid chain; its full sequence is Zinc finger and SCAN domain-containing protein 4 (430 aa).

The segment at Met-1–Glu-38 is disordered. Residues Arg-44–Ser-126 form the SCAN box domain. Residues Gly-164 to Thr-185 show a composition bias toward polar residues. Disordered regions lie at residues Gly-164–Gly-196, Tyr-224–Gly-257, and Glu-281–Glu-300. 4 C2H2-type zinc fingers span residues Tyr-309 to His-331, Phe-337 to His-359, Phe-365 to His-387, and Tyr-393 to His-415.

The protein localises to the nucleus. It localises to the chromosome. The protein resides in the telomere. Functionally, embryonic stem (ES) cell-specific transcription factor required to regulate ES cell pluripotency. Binds telomeres and plays a key role in genomic stability in ES cells by regulating telomere elongation. Acts as an activator of spontaneous telomere sister chromatid exchange (T-SCE) and telomere elongation in undifferentiated ES cells. In Ailuropoda melanoleuca (Giant panda), this protein is Zinc finger and SCAN domain-containing protein 4 (ZSCAN4).